The chain runs to 637 residues: BUD13 homolog (637 aa).

Residues 18–53 (SGTDAGLEGGPEAGRKRRKKRPKPGGAGGKGMRIVD) form a disordered region. K65 is covalently cross-linked (Glycyl lysine isopeptide (Lys-Gly) (interchain with G-Cter in SUMO2)). The disordered stretch occupies residues 104-470 (LLGGHGEDGH…KKQDQDTTDL (367 aa)). Residues 108 to 119 (HGEDGHFHHDDQ) show a composition bias toward basic and acidic residues. At T131 the chain carries Phosphothreonine. S135 is subject to Phosphoserine. Residue T144 is modified to Phosphothreonine. Residue S148 is modified to Phosphoserine. Phosphothreonine is present on T157. At S161 the chain carries Phosphoserine. T170 carries the post-translational modification Phosphothreonine. S174 is subject to Phosphoserine. Position 183 is a phosphothreonine (T183). At S187 the chain carries Phosphoserine. 2 positions are modified to phosphothreonine: T196 and T209. Phosphoserine is present on S213. T222 is modified (phosphothreonine). 8 positions are modified to phosphoserine: S226, S238, S259, S264, S272, S284, S285, and S297. Residues 260–275 (LGTSSPRQTHNHSPTA) are compositionally biased toward polar residues. Over residues 295–315 (HESPDLELHKAKSSKAAERAP) the composition is skewed to basic and acidic residues. Residues 318–335 (AASQSGLGPSHPSLSTNS) are compositionally biased toward polar residues. 2 positions are modified to phosphoserine: S341 and S344. Residues 353–362 (AHFEAKKQLD) are compositionally biased toward basic and acidic residues. Phosphoserine occurs at positions 371, 373, 376, 410, and 426. Positions 430–439 (RSPRPGKKTA) are enriched in basic residues. A compositionally biased stretch (basic and acidic residues) spans 453-465 (VQREHQELKKQDQ). The stretch at 490 to 538 (NLKLERLEQRRKAEKDSERDELYAQWGKGLAQSRQQQQNVEDAMKEMQK) forms a coiled coil. At Y512 the chain carries Phosphotyrosine. The interval 553–595 (LREQEREGDPMANFIKKNKAKENKNKKVKPRYSGPAPPPNRFN) is disordered. Position 585 is a phosphoserine (S585).

It belongs to the CWC26 family. As to quaternary structure, part of the activated spliceosome B/catalytic step 1 spliceosome, one of the forms of the spliceosome which has a well-formed active site but still cannot catalyze the branching reaction and is composed of at least 52 proteins, the U2, U5 and U6 snRNAs and the pre-mRNA. Component of the minor spliceosome, which splices U12-type introns.

The protein localises to the nucleus. Functionally, involved in pre-mRNA splicing as component of the activated spliceosome. As a component of the minor spliceosome, involved in the splicing of U12-type introns in pre-mRNAs. In Mus musculus (Mouse), this protein is BUD13 homolog (Bud13).